Reading from the N-terminus, the 761-residue chain is ARF GTPase-activating protein GIT1 (761 aa).

In terms of domain architecture, Arf-GAP spans Met-1 to Asp-124. The interaction with gamma-tubulin and localization to the centrosome stretch occupies residues Met-1 to Asp-124. Residues Cys-11–Cys-34 form a C4-type zinc finger. ANK repeat units follow at residues Asp-132 to Phe-161, Lys-166 to Ser-195, and Asn-199 to Asp-228. Phosphotyrosine is present on Tyr-224. Positions His-245–Asp-365 are interaction with PCLO. Residues Asp-253–Asp-415 form an interaction with PTK2/FAK1 region. The tract at residues Ser-254–Leu-367 is interaction with ARHGEF7. The segment at Arg-354–Leu-416 is disordered. Over residues Gly-357–Gln-374 the composition is skewed to polar residues. Phosphoserine is present on residues Ser-359 and Ser-362. Thr-364 is subject to Phosphothreonine. An interaction with NCK2 and GRIN3A region spans residues Asn-366 to Leu-587. The segment at Asn-366 to Leu-587 is required for localization at synapses. Phosphoserine occurs at positions 370 and 375. The residue at position 383 (Tyr-383) is a Phosphotyrosine. Residues Ser-385 and Ser-388 each carry the phosphoserine modification. Over residues Ser-385–Gln-394 the composition is skewed to acidic residues. Residue Thr-392 is modified to Phosphothreonine. 3 positions are modified to phosphoserine: Ser-410, Ser-413, and Ser-417. The interval Met-411 to Ala-466 is interaction with MAPK1. The interaction with IKBKG stretch occupies residues Ala-420–Lys-620. Residues Val-440–Pro-474 adopt a coiled-coil conformation. The disordered stretch occupies residues Leu-471–Arg-501. Residues Pro-474–Pro-484 show a composition bias toward pro residues. Thr-480 is modified (phosphothreonine). Ser-498 and Ser-536 each carry phosphoserine. At Thr-537 the chain carries Phosphothreonine. Tyr-545 and Tyr-554 each carry phosphotyrosine. Ser-561, Ser-571, Ser-592, and Ser-596 each carry phosphoserine. The segment at Pro-572 to Pro-606 is disordered. Phosphothreonine is present on Thr-601. The residue at position 630 (Ser-630) is a Phosphoserine. Positions Pro-637–Gln-761 are interaction with PXN and TGFB1I1.

Forms homodimers and possibly oligomers. May forms heterooligomers with GIT2. Interacts with G protein-coupled receptor kinases, including GRK2, GRK3, GRK5 and GRK6. Interacts with PPFIA1, PPFIA2 and PPFIA4. Interacts with GRIP1 and forms a ternary complex with PPFIA1 and GRIP1. Directly interacts with ARHGEF7/beta-PIX, forming in vitro a heptameric complex made of a GIT1 dimer and an ARHGEF7 trimer. Directly interacts with PXN/paxillin; this interaction is enhanced in the presence of ARHGEF7. Directly interacts (via C-terminus) with TGFB1I1/Hic-5 (via LD motif 3). Directly interacts with PTK2/FAK1. May interact with PTK2B/PYK2; this interaction may be indirect. Interacts with AMPA receptors GRIA2/3. Directly interacts with protein Piccolo/PCLO. Forms a complex with Ephrin-B1/EFNB1 and NCK2/GRB4 (via SH2); this interaction is important for spine morphogenesis and synapse formation. Interaction with NCK2 is transient and depends upon GIT1 phosphorylation at Tyr-383. Interacts with GRIN3A/GluN3A (via C-terminus); this interaction competes with GIT1 interaction with ARHGEF7 and limits synaptic localization of GIT1. Interacts with IKBKG/NEMO in resting bone mesenchymal stem cells, as well as in TNF-stimulated cells; this interaction may increase IKBKG affinity for 'Lys-63'-linked polyubiquitin chains. Interacts with GABA(A) receptors, including GABRB3 and GABRG2. Interacts with SCRIB. Interacts (via N- and C-terminus) with ENTR1/SDCCAG3 (via N-terminus); this interaction is direct. May form a tripartite complex with ENTR1 and PTPN13. Interacts with YWHAZ. Interacts with PAK1. Interacts with PAK3. Directly interacts (via N-terminus) with gamma-tubulin. Interacts with MAPK1 and MAPK3; this interaction is required for MAPK1/3 recruitment to focal adhesions. In terms of processing, phosphorylated by PAK1. Phosphorylation on tyrosine residues may be catalyzed by PTK2/FAK1 and SRC in growing fibroblasts. Phosphorylation at Tyr-383 is induced by activation of Ephrin-B1/EFNB1 and catalyzed by SRC family kinases. It is required for the interaction with NCK2 and for GIT1 recruitment to synapses in hippocampal neurons.

It localises to the cytoplasm. The protein localises to the synapse. The protein resides in the presynapse. It is found in the postsynapse. Its subcellular location is the postsynaptic density. It localises to the cell junction. The protein localises to the focal adhesion. The protein resides in the cell projection. It is found in the lamellipodium. Its subcellular location is the cytoskeleton. It localises to the microtubule organizing center. The protein localises to the centrosome. The protein resides in the spindle pole. GTPase-activating protein for ADP ribosylation factor family members, including ARF1. Multidomain scaffold protein that interacts with numerous proteins and therefore participates in many cellular functions, including receptor internalization, focal adhesion remodeling, and signaling by both G protein-coupled receptors and tyrosine kinase receptors. Through PAK1 activation, positively regulates microtubule nucleation during interphase. Plays a role in the regulation of cytokinesis; for this function, may act in a pathway also involving ENTR1 and PTPN13. May promote cell motility both by regulating focal complex dynamics and by local activation of RAC1. May act as scaffold for MAPK1/3 signal transduction in focal adhesions. Recruits MAPK1/3/ERK1/2 to focal adhesions after EGF stimulation via a Src-dependent pathway, hence stimulating cell migration. Plays a role in brain development and function. Involved in the regulation of spine density and synaptic plasticity that is required for processes involved in learning. Plays an important role in dendritic spine morphogenesis and synapse formation. In hippocampal neurons, recruits guanine nucleotide exchange factors (GEFs), such as ARHGEF7/beta-PIX, to the synaptic membrane. These in turn locally activate RAC1, which is an essential step for spine morphogenesis and synapse formation. May contribute to the organization of presynaptic active zones through oligomerization and formation of a Piccolo/PCLO-based protein network, which includes ARHGEF7/beta-PIX and FAK1. In neurons, through its interaction with liprin-alpha family members, may be required for AMPA receptor (GRIA2/3) proper targeting to the cell membrane. In complex with GABA(A) receptors and ARHGEF7, plays a crucial role in regulating GABA(A) receptor synaptic stability, maintaining GPHN/gephyrin scaffolds and hence GABAergic inhibitory synaptic transmission, by locally coordinating RAC1 and PAK1 downstream effector activity, leading to F-actin stabilization. May also be important for RAC1 downstream signaling pathway through PAK3 and regulation of neuronal inhibitory transmission at presynaptic input. Required for successful bone regeneration during fracture healing. The function in intramembranous ossification may, at least partly, exerted by macrophages in which GIT1 is a key negative regulator of redox homeostasis, IL1B production, and glycolysis, acting through the ERK1/2/NRF2/NFE2L2 axis. May play a role in angiogenesis during fracture healing. In this process, may regulate activation of the canonical NF-kappa-B signal in bone mesenchymal stem cells by enhancing the interaction between NEMO and 'Lys-63'-ubiquitinated RIPK1/RIP1, eventually leading to enhanced production of VEGFA and others angiogenic factors. Essential for VEGF signaling through the activation of phospholipase C-gamma and ERK1/2, hence may control endothelial cell proliferation and angiogenesis. In Homo sapiens (Human), this protein is ARF GTPase-activating protein GIT1 (GIT1).